The following is a 252-amino-acid chain: tRNA1(Val) (adenine(37)-N6)-methyltransferase (252 aa).

This sequence belongs to the methyltransferase superfamily. tRNA (adenine-N(6)-)-methyltransferase family.

The protein localises to the cytoplasm. It carries out the reaction adenosine(37) in tRNA1(Val) + S-adenosyl-L-methionine = N(6)-methyladenosine(37) in tRNA1(Val) + S-adenosyl-L-homocysteine + H(+). Functionally, specifically methylates the adenine in position 37 of tRNA(1)(Val) (anticodon cmo5UAC). The sequence is that of tRNA1(Val) (adenine(37)-N6)-methyltransferase from Yersinia pseudotuberculosis serotype O:3 (strain YPIII).